A 380-amino-acid polypeptide reads, in one-letter code: Tubulin alpha chain (380 aa).

Glu-46, Ser-115, Gly-119, Thr-120, Thr-154, Asn-181, and Asn-202 together coordinate GTP. Residue Glu-46 participates in Mg(2+) binding. Glu-228 is a catalytic residue.

The protein belongs to the tubulin family. As to quaternary structure, dimer of alpha and beta chains. A typical microtubule is a hollow water-filled tube with an outer diameter of 25 nm and an inner diameter of 15 nM. Alpha-beta heterodimers associate head-to-tail to form protofilaments running lengthwise along the microtubule wall with the beta-tubulin subunit facing the microtubule plus end conferring a structural polarity. Microtubules usually have 13 protofilaments but different protofilament numbers can be found in some organisms and specialized cells. Mg(2+) is required as a cofactor.

It localises to the cytoplasm. Its subcellular location is the cytoskeleton. It carries out the reaction GTP + H2O = GDP + phosphate + H(+). Functionally, tubulin is the major constituent of microtubules, a cylinder consisting of laterally associated linear protofilaments composed of alpha- and beta-tubulin heterodimers. Microtubules grow by the addition of GTP-tubulin dimers to the microtubule end, where a stabilizing cap forms. Below the cap, tubulin dimers are in GDP-bound state, owing to GTPase activity of alpha-tubulin. In Encephalitozoon hellem (Microsporidian parasite), this protein is Tubulin alpha chain (TUB1).